The chain runs to 378 residues: Queuine tRNA-ribosyltransferase (378 aa).

The active-site Proton acceptor is the Asp-92. Substrate contacts are provided by residues 92–96 (DSGGF), Asp-146, Gln-188, and Gly-215. Positions 246–252 (GVGTHLE) are RNA binding. The active-site Nucleophile is Asp-265. The interval 270–274 (TRLAR) is RNA binding; important for wobble base 34 recognition. Zn(2+) is bound by residues Cys-303, Cys-305, Cys-308, and His-334.

This sequence belongs to the queuine tRNA-ribosyltransferase family. As to quaternary structure, homodimer. Within each dimer, one monomer is responsible for RNA recognition and catalysis, while the other monomer binds to the replacement base PreQ1. The cofactor is Zn(2+).

It carries out the reaction 7-aminomethyl-7-carbaguanine + guanosine(34) in tRNA = 7-aminomethyl-7-carbaguanosine(34) in tRNA + guanine. It functions in the pathway tRNA modification; tRNA-queuosine biosynthesis. Catalyzes the base-exchange of a guanine (G) residue with the queuine precursor 7-aminomethyl-7-deazaguanine (PreQ1) at position 34 (anticodon wobble position) in tRNAs with GU(N) anticodons (tRNA-Asp, -Asn, -His and -Tyr). Catalysis occurs through a double-displacement mechanism. The nucleophile active site attacks the C1' of nucleotide 34 to detach the guanine base from the RNA, forming a covalent enzyme-RNA intermediate. The proton acceptor active site deprotonates the incoming PreQ1, allowing a nucleophilic attack on the C1' of the ribose to form the product. After dissociation, two additional enzymatic reactions on the tRNA convert PreQ1 to queuine (Q), resulting in the hypermodified nucleoside queuosine (7-(((4,5-cis-dihydroxy-2-cyclopenten-1-yl)amino)methyl)-7-deazaguanosine). This Thermosynechococcus vestitus (strain NIES-2133 / IAM M-273 / BP-1) protein is Queuine tRNA-ribosyltransferase.